The primary structure comprises 47 residues: Delta-stichotoxin-Hcr1d (47 aa).

3 cysteine pairs are disulfide-bonded: Cys-3-Cys-43, Cys-5-Cys-33, and Cys-26-Cys-44.

The protein belongs to the sea anemone sodium channel inhibitory toxin family. Type II subfamily.

It is found in the secreted. The protein resides in the nematocyst. Its function is as follows. Binds to site 3 of voltage-gated sodium channels and inhibits the inactivation process. In Radianthus crispa (Leathery sea anemone), this protein is Delta-stichotoxin-Hcr1d.